The primary structure comprises 1052 residues: MATATATSERFELAKHCSSRNWSKAIRVLDSLLAKESSILDICNRAFCYNQLELHKHVIKDCDKALLLEPFAIQAFILKGRALLALGRKQEAVLVLEQGYKSALQQTADVKQLLELEELLKDARREIDGILKSHATESPQETPAYHSEKSDEKSDKLDNHESGASSNGNSHESSSELGEQSKIVSFSKVASKASKQSDGNSDLCNGSVYKEKENGKCGSQINGYYESCKPCNGSDLHDNLAESSDRFGELSINGNKISIKSSKMSHKAEARCGISDESRKNKKYTIARISGTHSISVDFRLSRGIAQVNEGNYTKAISIFDKVLKEEPTYPEALIGRGTAYAFQRELESAIADFTKAIQSNPAASEAWKRRGQARAALGEYVEAVEDLTKALVFEPNSPDVLHERGIVNFKSKDFTAAVKDLSICLKQEKDNKSAYTYLGLAFASLGEYKKAEEAHLKSIQLDSNYLEAWLHLAQFYQELADHCKALECIEQVLQVDNRVWKAYHLRGLVFHGLGEHRKAIQELSIGLSIENTIECLYLRGSCYHAVGEYRDAVKDYDATVDVELDAVEKFVLQCLAFYQKELALYTASKVSSEFLCFDIDGDIDPMFKEYWCKRLHPKNVCEKVYRQPPLRESLKKGKLKKQDLAITKQKANILRFADLIGKRIQYDCPGFLPNKRQHRMAGLAVIEIAQKVSKAWRIEWRNSTKGTTKNGKKNRRRERTNILSQNRGGAGCSSSSFSETSTGYASLEDRSSGRSILSWQDVYSPAVRWRQISEPCDPVVWVNKLSEEFNSGFGSHTPMVLGQAKVVRYFPNYERTLTLAKSIIKDKLSVRSKKDKVIDLSKDEKIEKIMRAETCDELHNIVGEDFWVATWCDSTGSEGKRLEGTRITCIQKPGRLGYDFSIRTPCTPARWSDFDEEMTSAWEALCTAYCGENYGSTELDALETVRDAILRMTYYWYNFMPLARGTAVTGFVVLLGLLLAANMEFTETIPKGLQIDWEAILNVEPGSFVDSVKSWLYPSLKINTSWRDHTEISSAFSTTGAVVAALSTYND.

Position 2 is an N-acetylalanine (Ala2). 2 TPR repeats span residues 39 to 72 and 74 to 106; these read ILDICNRAFCYNQLELHKHVIKDCDKALLLEPFA and QAFILKGRALLALGRKQEAVLVLEQGYKSALQQ. Residues 107–136 adopt a coiled-coil conformation; sequence TADVKQLLELEELLKDARREIDGILKSHAT. A disordered region spans residues 131–181; that stretch reads LKSHATESPQETPAYHSEKSDEKSDKLDNHESGASSNGNSHESSSELGEQS. A compositionally biased stretch (basic and acidic residues) spans 146–161; the sequence is HSEKSDEKSDKLDNHE. Positions 162–181 are enriched in low complexity; it reads SGASSNGNSHESSSELGEQS. TPR repeat units lie at residues 297–330, 331–364, 365–398, 400–432, 433–466, 468–500, 502–534, 535–567, and 569–591; these read VDFRLSRGIAQVNEGNYTKAISIFDKVLKEEPTY, PEALIGRGTAYAFQRELESAIADFTKAIQSNPAA, SEAWKRRGQARAALGEYVEAVEDLTKALVFEPNS, DVLHERGIVNFKSKDFTAAVKDLSICLKQEKDN, KSAYTYLGLAFASLGEYKKAEEAHLKSIQLDSNY, EAWLHLAQFYQELADHCKALECIEQVLQVDNRV, KAYHLRGLVFHGLGEHRKAIQELSIGLSIENTI, ECLYLRGSCYHAVGEYRDAVKDYDATVDVELDA, and EKFVLQCLAFYQKELALYTASKV. A disordered region spans residues 704–739; it reads STKGTTKNGKKNRRRERTNILSQNRGGAGCSSSSFS. The helical transmembrane segment at 966-986 threads the bilayer; sequence GTAVTGFVVLLGLLLAANMEF.

As to quaternary structure, multimer. Interacts with EDS1. Interacts with SNC1 and RPS4. Interacts (via TPR domain) with SGT1 (via TPR domain). Interacts with the TCP transcription factors TCP8, TCP14, TCP15, TCP20, TCP22 and TCP23. As to expression, ubiquitous. Not detected in very young flowers and older siliques.

It localises to the nucleus. The protein resides in the cytoplasm. The protein localises to the perinuclear region. It is found in the membrane. Its subcellular location is the microsome. Its function is as follows. Negative regulator of effector-triggered immunity associated with the EDS1 resistance pathway. May localize its interactors to a microsomal membrane. May therefore negatively regulate RPS4 and SNC1 translocation to the nucleus. Contributes to the regulation of RPS2 and RPS4 protein levels and negatively regulates SNC1 stability. The chain is Suppressor of RPS4-RLD 1 from Arabidopsis thaliana (Mouse-ear cress).